Reading from the N-terminus, the 308-residue chain is Cytochrome b (308 aa).

Transmembrane regions (helical) follow at residues 1-21 (FGSL…LLAT), 45-66 (WLIR…YLHI), 81-101 (WNTG…GYVL), and 146-166 (FFAL…IHFT). Heme b is bound at residue histidine 65. The heme b site is built by histidine 150 and histidine 164. Residue histidine 169 participates in a ubiquinone binding. Helical transmembrane passes span 194–214 (VKDI…ALFS), 256–276 (LGGV…PFLH), and 288–308 (LSQF…WVGS).

This sequence belongs to the cytochrome b family. The cytochrome bc1 complex contains 11 subunits: 3 respiratory subunits (MT-CYB, CYC1 and UQCRFS1), 2 core proteins (UQCRC1 and UQCRC2) and 6 low-molecular weight proteins (UQCRH/QCR6, UQCRB/QCR7, UQCRQ/QCR8, UQCR10/QCR9, UQCR11/QCR10 and a cleavage product of UQCRFS1). This cytochrome bc1 complex then forms a dimer. The cofactor is heme b.

The protein resides in the mitochondrion inner membrane. Component of the ubiquinol-cytochrome c reductase complex (complex III or cytochrome b-c1 complex) that is part of the mitochondrial respiratory chain. The b-c1 complex mediates electron transfer from ubiquinol to cytochrome c. Contributes to the generation of a proton gradient across the mitochondrial membrane that is then used for ATP synthesis. The polypeptide is Cytochrome b (MT-CYB) (Colaptes rupicola (Southern Andean flicker)).